Consider the following 530-residue polypeptide: Estrogen receptor beta (530 aa).

The modulating stretch occupies residues 1-148 (MEIKNSPSSL…SPNAKRDAHF (148 aa)). Serine 61 carries the post-translational modification Phosphoserine; alternate. The O-linked (GlcNAc) serine; alternate glycan is linked to serine 61. Serine 87 and serine 105 each carry phosphoserine; by MAPK. 2 consecutive NR C4-type zinc fingers follow at residues 149–169 (CPVC…CEGC) and 185–209 (CPAT…LRKC). A DNA-binding region (nuclear receptor) is located at residues 149–214 (CPVCSDYASG…RLRKCYEVGM (66 aa)). The region spanning 264–498 (SPEQLVLTLL…DLLLEMLNAH (235 aa)) is the NR LBD domain. Residues 506–515 (SISGSECSST) are compositionally biased toward low complexity. A disordered region spans residues 506–530 (SISGSECSSTEDSKNKESSQNLQSQ).

The protein belongs to the nuclear hormone receptor family. NR3 subfamily. Binds DNA as a homodimer. Can form a heterodimer with ESR1. Interacts with NCOA1, NCOA3, NCOA5 and NCOA6 coactivators, leading to a strong increase of transcription of target genes. Interacts with UBE1C and AKAP13. Interacts with DNTTIP2. Interacts with CCDC62 in the presence of estradiol/E2; this interaction seems to enhance the transcription of target genes. Interacts with PRMT2. Interacts with CCAR2 (via N-terminus) in a ligand-independent manner. Interacts with DNAAF4. Interacts with RBM39, in the presence of estradiol (E2). Interacts with STUB1/CHIP. In terms of processing, phosphorylation at Ser-87 and Ser-105 recruits NCOA1. Expressed in the CA1 region of the hippocampus, expression decreases with age (at protein level). Expressed in prostate, ovary, lung, liver, kidney, fat, bone, brain, uterus and testis.

It localises to the nucleus. Its function is as follows. Nuclear hormone receptor. Binds estrogens with an affinity similar to that of ESR1/ER-alpha, and activates expression of reporter genes containing estrogen response elements (ERE) in an estrogen-dependent manner. In terms of biological role, lacks ligand binding affinity and suppresses ESR1/ER-alpha and ESR2 isoform 1/ER-beta1 mediated transcriptional activation and may act as a dominant negative regulator of estrogen action. Unable to bind DNA and activate transcription due to the truncation of the DNA binding domain. The polypeptide is Estrogen receptor beta (Esr2) (Rattus norvegicus (Rat)).